Here is a 364-residue protein sequence, read N- to C-terminus: MTDILNLTYEELEAFMTAELGEPRFRARQVWQWLWQKCARSFDEMTNVSKATRARLAEKAVITWPEVETVQKSADGTTKFLLRLADGALVETVLIPSASREGTLRITQCLSCQVGCAMGCTFCSTGTMGFERNMTMGEILGQVLVARAHLGDSRPDHPILRNLVFMGMGEPLLNLNEVMRSLRTLNDEFGLSFSPRRITVSTCGIEKGLRELGESGLAFLAVSLHAPNQEIRKRIMPKAAHWHLDDLITALESYPLKTRERVTFEYLLLGGVNDGIEHARELVRLVSRTKGKLNLIVYNPAEGDPYDAPTPERILAFEQYLWSKNITAIIRKSKGQDIKAACGQLKASELQRGTASAGADAPED.

The active-site Proton acceptor is glutamate 91. The region spanning glycine 102–aspartate 337 is the Radical SAM core domain. An intrachain disulfide couples cysteine 109 to cysteine 342. [4Fe-4S] cluster contacts are provided by cysteine 116, cysteine 120, and cysteine 123. Residues glycine 169 to glutamate 170, serine 201, serine 223 to histidine 225, and asparagine 299 each bind S-adenosyl-L-methionine. Cysteine 342 (S-methylcysteine intermediate) is an active-site residue.

Belongs to the radical SAM superfamily. RlmN family. [4Fe-4S] cluster is required as a cofactor.

Its subcellular location is the cytoplasm. It catalyses the reaction adenosine(2503) in 23S rRNA + 2 reduced [2Fe-2S]-[ferredoxin] + 2 S-adenosyl-L-methionine = 2-methyladenosine(2503) in 23S rRNA + 5'-deoxyadenosine + L-methionine + 2 oxidized [2Fe-2S]-[ferredoxin] + S-adenosyl-L-homocysteine. It carries out the reaction adenosine(37) in tRNA + 2 reduced [2Fe-2S]-[ferredoxin] + 2 S-adenosyl-L-methionine = 2-methyladenosine(37) in tRNA + 5'-deoxyadenosine + L-methionine + 2 oxidized [2Fe-2S]-[ferredoxin] + S-adenosyl-L-homocysteine. In terms of biological role, specifically methylates position 2 of adenine 2503 in 23S rRNA and position 2 of adenine 37 in tRNAs. m2A2503 modification seems to play a crucial role in the proofreading step occurring at the peptidyl transferase center and thus would serve to optimize ribosomal fidelity. The chain is Dual-specificity RNA methyltransferase RlmN from Nitratidesulfovibrio vulgaris (strain DP4) (Desulfovibrio vulgaris).